The following is a 923-amino-acid chain: MLRRGSQALRRFSTGRVYFKNKLKLALIGQSLFGQEVYSHLRKEGHRVVGVFTVPDKDGKADPLALAAEKDGTPVFKLPKWRVKGKTIKEVAEAYRSVGAELNVLPFCTQFIPMDIIDSPKHGSIIYHPSILPRHRGASAINWTLIMGDKKAGFSVFWADDGLDTGPILLQRSCDVEPNDTVDALYNRFLFPEGIKAMVEAVQLIADGKAPRIPQPEEGATYEGIQKKENAEISWDQSAEVLHNWIRGHDKVPGAWTEINGQMVTFYGSTLLNSSVPPGEPLEIKGAKKPGLVTKNGLVLFGNDGKALTVRNLQFEDGKMIPASQYFSTGETSVVELTAEEVKVAETIKVIWAGILSNVPIIEDSTDFFKSGASSMDVARLVEEIRQKCGGLQLQNEDVYMATKFEGFIQKVVRKLRGEDQEVELVVDYISKEVNEIMVKMPYQCFINGQFTDADDGKTYDTINPTDGSTICKVSYASLADVDKAVAAAKDAFENGEWGRMNARERGRLMYRLADLLEENQEELATIEALDSGAVYTLALKTHIGMSVQTFRYFAGWCDKIQGSTIPINQARPNRNLTFTKKEPLGVCAIIIPWNYPLMMLAWKSAACLAAGNTLVLKPAQVTPLTALKFAELSVKAGFPKGVINIIPGSGGIAGQRLSEHPDIRKLGFTGSTPIGKQIMKSCAVSNLKKVSLELGGKSPLIIFNDCELDKAVRMGMGAVFFNKGENCIAAGRLFVEESIHDEFVTRVVEEIKKMKIGDPLDRSTDHGPQNHKAHLEKLLQYCETGVKEGATLVYGGRQVQRPGFFMEPTVFTDVEDYMYLAKEESFGPIMVISKFQNGDIDGVLQRANSTEYGLASGVFTRDINKAMYVSEKLEAGTVFINTYNKTDVAAPFGGVKQSGFGKDLGEEALNEYLKTKTVTLEY.

A mitochondrion; not cleaved-targeting transit peptide spans Met-1–Phe-19. The hydrolase domain stretch occupies residues Leu-23–Glu-331. Ser-31 is subject to Phosphoserine. An N6-succinyllysine modification is found at Lys-60. Gln-110–Ile-112 lines the (6R)-10-formyltetrahydrofolate pocket. The active-site Proton donor is the His-128. (6R)-10-formyltetrahydrofolate is bound at residue Asp-164. In terms of domain architecture, Carrier spans Ala-339 to Leu-416. An O-(pantetheine 4'-phosphoryl)serine modification is found at Ser-375. Positions Met-438–Tyr-923 are aldehyde dehydrogenase domain. Residues Ile-592 to Trp-594 and Lys-618 to Gln-621 each bind NADP(+). Phosphoserine is present on Ser-650. NADP(+)-binding positions include Gly-651–Gln-656 and Gly-671–Ser-672. At Lys-681 the chain carries N6-succinyllysine. Catalysis depends on Glu-694, which acts as the Proton acceptor. Residue Glu-694–Leu-695 participates in NADP(+) binding. Cys-728 acts as the Proton donor in catalysis. Lys-778 provides a ligand contact to NADP(+). The residue at position 788 (Lys-788) is an N6-succinyllysine. Position 825 to 827 (Glu-825 to Phe-827) interacts with NADP(+). N6-acetyllysine is present on Lys-903.

It in the N-terminal section; belongs to the GART family. In the C-terminal section; belongs to the aldehyde dehydrogenase family. ALDH1L subfamily. In terms of processing, phosphopantetheinylation at Ser-375 by AASDHPPT is required for the formyltetrahydrofolate dehydrogenase activity. In terms of tissue distribution, highly expressed in pancreas, heart, brain and skeletal muscle.

Its subcellular location is the mitochondrion. The enzyme catalyses (6R)-10-formyltetrahydrofolate + NADP(+) + H2O = (6S)-5,6,7,8-tetrahydrofolate + CO2 + NADPH + H(+). In terms of biological role, mitochondrial 10-formyltetrahydrofolate dehydrogenase that catalyzes the NADP(+)-dependent conversion of 10-formyltetrahydrofolate to tetrahydrofolate and carbon dioxide. This Homo sapiens (Human) protein is Mitochondrial 10-formyltetrahydrofolate dehydrogenase.